Consider the following 2070-residue polypeptide: Multiple PDZ domain protein (2070 aa).

An L27 domain is found at 1–63 (MLEAIDKNRA…SVQQLKDQVN (63 aa)). A PDZ 1 domain is found at 137–224 (VFELLKPPSG…TVQLVIARGS (88 aa)). Ser230 carries the phosphoserine modification. PDZ domains follow at residues 257 to 337 (TIEL…ARGA) and 377 to 463 (DVEL…MRRG). Ser483 carries the phosphoserine modification. PDZ domains lie at 553-634 (VAHV…CRRT) and 700-786 (HIEL…VAKP). A phosphoserine mark is found at Ser790 and Ser1078. A PDZ 6 domain is found at 1008–1089 (TINIAKGNSS…IGPDIKITYV (82 aa)). The tract at residues 1121 to 1140 (DIPELPEREEGEGEESELQN) is disordered. Positions 1151-1243 (RVELWREPSK…PVVFMVQSII (93 aa)) constitute a PDZ 7 domain. Omega-N-methylarginine is present on Arg1170. The interval 1278-1324 (ADKAPSQSESEPEKAPLCSVPPPPPSAFAEMGSDHTQSSASKISQDV) is disordered. Over residues 1311 to 1321 (DHTQSSASKIS) the composition is skewed to polar residues. PDZ domains follow at residues 1350-1433 (MIEL…IRNK) and 1483-1564 (HLEL…HAEN). Positions 1567-1612 (SQAVPSAAGAASGEKKNSSQSLMVPQSGSPEPESIRNTSRSSTPAI) are disordered. A compositionally biased stretch (polar residues) spans 1584–1610 (SSQSLMVPQSGSPEPESIRNTSRSSTP). 2 consecutive PDZ domains span residues 1629–1712 (TIEI…YRDE) and 1725–1807 (TIEL…GRIK). Ser1818 and Ser1824 each carry phosphoserine. PDZ domains follow at residues 1862–1948 (TVEM…VAGG) and 1987–2070 (SITL…MVLS).

Interacts with CLDN5, DLG4, GRIN1, F11R/JAM, CLDN1, NG2, CRB1, MPP4 and PALS1. Interacts with HTR2A, HTR2B, HTR2C, PLEKHA1/TAPP1, PLEKHA2/TAPP2, CXADR, SYNGAP1, CAMK2A and CAMK2B. Interacts with FAT4 (via cytoplasmic domain). Interacts with DLL1. In terms of assembly, (Microbial infection) Interacts with human adenovirus type 9 E4-ORF1 protein. As to quaternary structure, (Microbial infection) Interacts with human papillomavirus 18/HPV18 protein E6. In terms of tissue distribution, expressed in heart, brain, placenta, liver, skeletal muscle, kidney and pancreas.

The protein resides in the cell membrane. It is found in the apical cell membrane. It localises to the postsynaptic density. Its subcellular location is the cell projection. The protein localises to the dendrite. The protein resides in the cell junction. It is found in the tight junction. It localises to the synapse. Its subcellular location is the synaptosome. In terms of biological role, member of the NMDAR signaling complex that may play a role in control of AMPAR potentiation and synaptic plasticity in excitatory synapses. Promotes clustering of HT2RC at the cell surface. The sequence is that of Multiple PDZ domain protein (MPDZ) from Homo sapiens (Human).